A 161-amino-acid chain; its full sequence is Anaerobic nitrite reductase GLB1 (161 aa).

One can recognise a Globin domain in the interval 9–157; the sequence is VFTEEQEALV…LVAAIKSEMK (149 aa). A Homodimerization motif is present at residues 42-46; it reads EIAPS. Residues serine 52, lysine 66, histidine 70, arginine 100, and histidine 105 each coordinate heme b. The short motif at 112 to 123 is the Homodimerization element; that stretch reads NEHFETRFALLE.

This sequence belongs to the plant globin family. Homodimer. Heme b is required as a cofactor. Root specific.

It is found in the cytoplasm. It localises to the nucleus. The catalysed reaction is Fe(III)-heme b-[protein] + nitric oxide + H2O = Fe(II)-heme b-[protein] + nitrite + 2 H(+). Its function is as follows. Phytoglobin that reduces nitrite to nitric oxide (NO) under anoxic conditions (e.g. during flooding or in waterlogged soil) and upon root nodulation. Required for general plant development and during nodulation, especially for the onset of symbiosis. Monitors nitric oxide (NO) levels during early phase of the nitrogen-fixing symbiosis and buffers oxygen in functioning nodules. May not function as an oxygen storage or transport protein. Has an unusually high affinity for O(2) through a hexacoordinate heme iron because of a very low dissociation constant. This Trema tomentosum (Peach-leaf poison-bush) protein is Anaerobic nitrite reductase GLB1 (GLB1).